Reading from the N-terminus, the 136-residue chain is Large ribosomal subunit protein uL16 (136 aa).

The protein belongs to the universal ribosomal protein uL16 family. In terms of assembly, part of the 50S ribosomal subunit.

Binds 23S rRNA and is also seen to make contacts with the A and possibly P site tRNAs. In Elusimicrobium minutum (strain Pei191), this protein is Large ribosomal subunit protein uL16.